Reading from the N-terminus, the 1889-residue chain is Bromodomain adjacent to zinc finger domain protein 2A (1889 aa).

Disordered regions lie at residues 1-59, 384-433, and 479-526; these read MEME…NGLS, FGLN…SPAA, and TTPV…GAVA. A compositionally biased stretch (polar residues) spans 35–59; that stretch reads TNGSPMNFPQQGKSLNGDVNVNGLS. Positions 332–726 are required for TTF1 binding; that stretch reads EGNPVISALD…ESQTPVQGQA (395 aa). Positions 423-433 are enriched in low complexity; the sequence is PAVSPTASPAA. Polar residues-rich tracts occupy residues 479 to 489 and 498 to 509; these read TTPVTSPQGSP and QTVSPARKNVSS. Phosphothreonine is present on Thr-499. At Ser-501 the chain carries Phosphoserine. One can recognise an MBD domain in the interval 538 to 609; that stretch reads IATPEEVRLP…EHFSFSPRMP (72 aa). Thr-540 carries the post-translational modification Phosphothreonine. A Phosphoserine modification is found at Ser-605. The tract at residues 638–791 is disordered; sequence QAITGKRGRP…ARPSCRADKT (154 aa). DNA-binding regions (a.T hook) lie at residues 641-653 and 662-674; these read TGKR…NEKA and KRGR…IKMP. A compositionally biased stretch (basic and acidic residues) spans 648 to 660; it reads RNNEKAKNKEVPK. The span at 661-670 shows a compositional bias: basic residues; sequence VKRGRGRPPK. Position 672 is an N6-acetyllysine; by KAT8 (Lys-672). Residues 678 to 701 are compositionally biased toward basic and acidic residues; sequence NKTDNRLPKKLETQEILSEDDKAK. Positions 686 to 813 form a coiled coil; it reads KKLETQEILS…QQAILEEMKK (128 aa). A compositionally biased stretch (basic residues) spans 702–713; the sequence is MTKNKKKMRQKV. Residues 716–726 are compositionally biased toward polar residues; that stretch reads GESQTPVQGQA. Composition is skewed to basic and acidic residues over residues 731–740 and 748–791; these read KQDTKSLKQK and AEKE…ADKT. At Lys-790 the chain carries N6-acetyllysine. One can recognise a DDT domain in the interval 839–904; sequence SRAFSDCLTI…LKAALHDPGL (66 aa). Lys-857 participates in a covalent cross-link: Glycyl lysine isopeptide (Lys-Gly) (interchain with G-Cter in SUMO2). The disordered stretch occupies residues 1039–1063; the sequence is EETSGIEEEEEEENTTAVHGRRGRK. At Ser-1042 the chain carries Phosphoserine. Residues 1042–1052 are compositionally biased toward acidic residues; sequence SGIEEEEEEEN. Glycyl lysine isopeptide (Lys-Gly) (interchain with G-Cter in SUMO2) cross-links involve residues Lys-1141 and Lys-1163. Disordered stretches follow at residues 1147 to 1247 and 1269 to 1397; these read LMEV…GQSQ and LSSS…GRPP. Phosphoserine is present on Ser-1174. A DNA-binding region (a.T hook 3) is located at residues 1176 to 1188; that stretch reads ARSRGRPRKPKPG. Composition is skewed to polar residues over residues 1190–1231, 1269–1278, and 1331–1346; these read LQPQ…QPSS, LSSSVLTPDS, and DQPT…SKPM. Phosphoserine occurs at positions 1374, 1377, and 1383. Positions 1390–1402 form a DNA-binding region, a.T hook 4; sequence PKRRGRPPSKFFK. Ser-1545 is modified (phosphoserine). Residues Lys-1662 and Lys-1695 each participate in a glycyl lysine isopeptide (Lys-Gly) (interchain with G-Cter in SUMO2) cross-link. The PHD-type zinc finger occupies 1662–1712; the sequence is KVTCLVCRKGDNDEFLLLCDGCDRGCHIYCHRPKMEAVPEGDWFCAVCLSQ. A disordered region spans residues 1720-1778; that stretch reads QRPGFPKRGQKRKSSFPLTFPEGDSRRRMLSRSRDSPAVPRYPEDGLSPPKRRRHSMRS. Ser-1733 is modified (phosphoserine). At Thr-1738 the chain carries Phosphothreonine. Residues 1742–1754 are compositionally biased toward basic and acidic residues; that stretch reads GDSRRRMLSRSRD. Phosphoserine is present on residues Ser-1755 and Ser-1767. The segment covering 1769-1778 has biased composition (basic residues); that stretch reads PKRRRHSMRS. The Bromo domain maps to 1777 to 1881; the sequence is RSHHSDLTFC…RFFESRWEEF (105 aa).

The protein belongs to the WAL family. As to quaternary structure, component of the NoRC-1 ISWI chromatin remodeling complex at least composed of SMARCA1 and BAZ2A/TIP5, which regulates the spacing of histone octamers on the DNA template to facilitate access to DNA. Within the NoRC-1 ISWI chromatin remodeling complex interacts with SMARCA1; the interaction is direct. Component of the NoRC-5 ISWI chromatin remodeling complex (also called the NoRC nucleolar-remodeling complex), at least composed of SMARCA5/SNF2H and BAZ2A/TIP5, which regulates the spacing of histone octamers on the DNA template to facilitate access to DNA. Within the NoRC-5 ISWI chromatin remodeling complexes interacts with SMARCA5/SNF2H; the interaction is direct. Interacts with TTF1; the interaction is required for recruitment of the NoRC-5 ISWI chromatin remodeling complex to rDNA. Interacts with HDAC1. Interacts with SIN3A. Interacts with DNMT1 and DNM3B. Interacts with BEND3 and USP21. Ubiquitinated. Deubiquitinated by USP21 leading to its stabilization. Post-translationally, acetylation at Lys-672 by KAT8/MOF promotes its dissociation from pRNA, affecting heterochromatin formation, nucleosome positioning and rDNA silencing. Deacetylation by SIRT1 in late S phase enhances pRNA-binding, allowing de novo DNA methylation and heterochromatin formation. Acetylation is high during S phase and declines to background levels in late S phase when the silent copies of rRNA genes are replicated.

The protein resides in the nucleus. Its subcellular location is the nucleolus. Regulatory subunit of the ATP-dependent NoRC-1 and NoRC-5 ISWI chromatin remodeling complexes, which form ordered nucleosome arrays on chromatin and facilitate access to DNA during DNA-templated processes such as DNA replication, transcription, and repair. Both complexes regulate the spacing of nucleosomes along the chromatin and have the ability to slide mononucleosomes to the center of a DNA template. Directly stimulates the ATPase activity of SMARCA5 in the NoRC-5 ISWI chromatin remodeling complex. The NoRC-1 ISWI chromatin remodeling complex has a lower ATP hydrolysis rate than the NoRC-5 ISWI chromatin remodeling complex. Within the NoRC-5 ISWI chromatin remodeling complex, mediates silencing of a fraction of rDNA by recruiting histone-modifying enzymes and DNA methyltransferases, leading to heterochromatin formation and transcriptional silencing. In the complex, it plays a central role by being recruited to rDNA and by targeting chromatin modifying enzymes such as HDAC1, leading to repress RNA polymerase I transcription. Recruited to rDNA via its interaction with TTF1 and its ability to recognize and bind histone H4 acetylated on 'Lys-16' (H4K16ac), leading to deacetylation of H4K5ac, H4K8ac, H4K12ac but not H4K16ac. Specifically binds pRNAs, 150-250 nucleotide RNAs that are complementary in sequence to the rDNA promoter; pRNA-binding is required for heterochromatin formation and rDNA silencing. The polypeptide is Bromodomain adjacent to zinc finger domain protein 2A (Baz2a) (Mus musculus (Mouse)).